Reading from the N-terminus, the 111-residue chain is Disintegrin Eo1 subunit 1 (111 aa).

The first 20 residues, 1–20 (MIQVLLVIICLAVFPYQGSS), serve as a signal peptide directing secretion. Positions 21-46 (IILESGNVNDFELVYPKKVTVLPTGA) are excised as a propeptide. In terms of domain architecture, Disintegrin spans 26–111 (GNVNDFELVY…SDCPRNPWKD (86 aa)). 4 disulfides stabilise this stretch: Cys-53/Cys-76, Cys-67/Cys-73, Cys-72/Cys-97, and Cys-85/Cys-104. The Cell attachment site; atypical (WGD) signature appears at 89–91 (WGD). The propeptide occupies 110–111 (KD).

Belongs to the disintegrin family. Dimeric disintegrin subfamily. As to quaternary structure, heterodimer; disulfide-linked. In terms of tissue distribution, expressed by the venom gland.

The protein resides in the secreted. Poor inhibitor of platelet aggregation. The disintegrin inhibits the adhesion of cells expressing the RGD-dependent integrin alpha-5/beta-1 (ITGA5/ITGB1) to immobilized fibronectin. Inhibition on alpha-IIb/beta-3 (ITGA2B/ITGB3) is low. This is Disintegrin Eo1 subunit 1 from Echis ocellatus (Ocellated saw-scaled viper).